The chain runs to 76 residues: Large ribosomal subunit protein bL31 (76 aa).

Cys16, Cys18, Cys36, and Cys39 together coordinate Zn(2+).

The protein belongs to the bacterial ribosomal protein bL31 family. Type A subfamily. As to quaternary structure, part of the 50S ribosomal subunit. Zn(2+) is required as a cofactor.

Functionally, binds the 23S rRNA. The sequence is that of Large ribosomal subunit protein bL31 from Syntrophobacter fumaroxidans (strain DSM 10017 / MPOB).